Consider the following 517-residue polypeptide: Steroid 17-alpha-hydroxylase/17,20 lyase (517 aa).

Cys451 is a binding site for heme.

The protein belongs to the cytochrome P450 family. Heme serves as cofactor.

Its subcellular location is the membrane. It carries out the reaction a C21-steroid + reduced [NADPH--hemoprotein reductase] + O2 = a 17alpha-hydroxy-C21-steroid + oxidized [NADPH--hemoprotein reductase] + H2O + H(+). The catalysed reaction is 17alpha-hydroxyprogesterone + reduced [NADPH--hemoprotein reductase] + O2 = androst-4-ene-3,17-dione + acetate + oxidized [NADPH--hemoprotein reductase] + H2O + 2 H(+). It catalyses the reaction 17alpha-hydroxypregnenolone + reduced [NADPH--hemoprotein reductase] + O2 = 3beta-hydroxyandrost-5-en-17-one + acetate + oxidized [NADPH--hemoprotein reductase] + H2O + 2 H(+). Its pathway is lipid metabolism; steroid biosynthesis. Its function is as follows. Conversion of pregnenolone and progesterone to their 17-alpha-hydroxylated products and subsequently to dehydroepiandrosterone (DHEA) and androstenedione. Catalyzes both the 17-alpha-hydroxylation and the 17,20-lyase reaction. In Oryzias latipes (Japanese rice fish), this protein is Steroid 17-alpha-hydroxylase/17,20 lyase (cyp17a1).